Consider the following 319-residue polypeptide: Phosphate acyltransferase (319 aa).

Belongs to the PlsX family. As to quaternary structure, homodimer. Probably interacts with PlsY.

The protein resides in the cytoplasm. The catalysed reaction is a fatty acyl-[ACP] + phosphate = an acyl phosphate + holo-[ACP]. The protein operates within lipid metabolism; phospholipid metabolism. Functionally, catalyzes the reversible formation of acyl-phosphate (acyl-PO(4)) from acyl-[acyl-carrier-protein] (acyl-ACP). This enzyme utilizes acyl-ACP as fatty acyl donor, but not acyl-CoA. This Chlamydia muridarum (strain MoPn / Nigg) protein is Phosphate acyltransferase.